A 137-amino-acid polypeptide reads, in one-letter code: uncharacterized protein (137 aa).

It belongs to the ycf72 family.

Its subcellular location is the plastid. The protein resides in the chloroplast. This is an uncharacterized protein from Zea mays (Maize).